The following is a 258-amino-acid chain: UPF0758 protein Bamb_2548 (258 aa).

Positions 1–43 are disordered; it reads MLSPCLAAPATECRDPADAPAAPARHTGPARPRKRRPRNWKPH. Residues 31–43 show a composition bias toward basic residues; that stretch reads RPRKRRPRNWKPH. One can recognise an MPN domain in the interval 136–258; it reads QIDSPGAVED…TFSFARAGWL (123 aa). His-207, His-209, and Asp-220 together coordinate Zn(2+). Residues 207–220 carry the JAMM motif motif; the sequence is HNHPSGAVQPSAED.

Belongs to the UPF0758 family.

This is UPF0758 protein Bamb_2548 from Burkholderia ambifaria (strain ATCC BAA-244 / DSM 16087 / CCUG 44356 / LMG 19182 / AMMD) (Burkholderia cepacia (strain AMMD)).